Consider the following 101-residue polypeptide: Small ubiquitin-related modifier 1 (101 aa).

S2 bears the N-acetylserine mark. Phosphoserine is present on S2. K7 is covalently cross-linked (Glycyl lysine isopeptide (Lys-Gly) (interchain with G-Cter in SUMO1); alternate). K7 is covalently cross-linked (Glycyl lysine isopeptide (Lys-Gly) (interchain with G-Cter in SUMO2); alternate). S9 is modified (phosphoserine). Residues K16, K17, and K23 each participate in a glycyl lysine isopeptide (Lys-Gly) (interchain with G-Cter in SUMO2) cross-link. Residues 20–97 form the Ubiquitin-like domain; that stretch reads EYIKLKVIGQ…IEVYHEQTGG (78 aa). A Glycyl lysine isopeptide (Lys-Gly) (interchain with G-Cter in SUMO1) cross-link involves residue K25. Position 32 is a phosphoserine (S32). Glycyl lysine isopeptide (Lys-Gly) (interchain with G-Cter in SUMO2) cross-links involve residues K37, K39, K45, and K46. G97 is covalently cross-linked (Glycyl lysine isopeptide (Gly-Lys) (interchain with K-? in acceptor proteins)). Residues 98 to 101 constitute a propeptide that is removed on maturation; the sequence is HSTV.

This sequence belongs to the ubiquitin family. SUMO subfamily. As to quaternary structure, covalently attached to KCNB1; UBE2I increases cross-linking with KCNB1 and PIAS1 decreases cross-links with KCNB1. Interacts with SAE2, RANBP2, PIAS1 and PIAS2. Interacts with PRKN. Covalently attached to a number of proteins such as IKFZ1, PML, RANGAP1, HIPK2, SP100, p53, p73-alpha, MDM2, JUN, DNMT3B and TDG. Also interacts with HIF1A, HIPK2, HIPK3, CHD3, EXOSC9, RAD51 and RAD52. Interacts with USP25 (via ts SIM domain); the interaction weakly sumoylates USP25. Interacts with SIMC1, CASP8AP2, RNF111 and SOBP (via SIM domains). Interacts with BHLHE40/DEC1. Interacts with RWDD3. Interacts with UBE2I/UBC9 and this interaction is enhanced in the presence of RWDD3. Interacts with MTA1. Interacts with SENP2. Interacts with HINT1. Post-translationally, cleavage of precursor form by SENP1, SENP2 is necessary for function. In terms of processing, polymeric SUMO1 chains undergo polyubiquitination by RNF4.

The protein resides in the nucleus membrane. It is found in the nucleus speckle. Its subcellular location is the cytoplasm. It localises to the nucleus. The protein localises to the PML body. The protein resides in the cell membrane. Its function is as follows. Ubiquitin-like protein that can be covalently attached to proteins as a monomer or a lysine-linked polymer. Covalent attachment via an isopeptide bond to its substrates requires prior activation by the E1 complex SAE1-SAE2 and linkage to the E2 enzyme UBE2I, and can be promoted by E3 ligases such as PIAS1-4, RANBP2 or CBX4. This post-translational modification on lysine residues of proteins plays a crucial role in a number of cellular processes such as nuclear transport, DNA replication and repair, mitosis and signal transduction. Involved for instance in targeting RANGAP1 to the nuclear pore complex protein RANBP2. Covalently attached to the voltage-gated potassium channel KCNB1; this modulates the gating characteristics of KCNB1. Polymeric SUMO1 chains are also susceptible to polyubiquitination which functions as a signal for proteasomal degradation of modified proteins. May also regulate a network of genes involved in palate development. Covalently attached to ZFHX3. The protein is Small ubiquitin-related modifier 1 (SUMO1) of Cervus nippon (Sika deer).